Reading from the N-terminus, the 46-residue chain is Ligatoxin-B (46 aa).

Cystine bridges form between cysteine 3/cysteine 40, cysteine 4/cysteine 32, and cysteine 16/cysteine 26.

Belongs to the plant thionin (TC 1.C.44) family.

Its subcellular location is the secreted. In terms of biological role, thionins are small plant proteins which are toxic to animal cells. They seem to exert their toxic effect at the level of the cell membrane. Their precise function is not known. The sequence is that of Ligatoxin-B from Phoradendron liga (Argentine mistletoe).